Here is a 191-residue protein sequence, read N- to C-terminus: Putative glutathione-dependent formaldehyde-activating enzyme (191 aa).

The CENP-V/GFA domain occupies 20-166 (FPGGNLYCKC…FHSLGLETYD (147 aa)). Zn(2+) contacts are provided by C27, C29, C48, C50, C53, C95, and C98.

The protein belongs to the Gfa family. Requires Zn(2+) as cofactor.

It carries out the reaction S-(hydroxymethyl)glutathione = glutathione + formaldehyde. Its pathway is one-carbon metabolism; formaldehyde degradation; formate from formaldehyde (glutathione route): step 1/3. In terms of biological role, catalyzes the condensation of formaldehyde and glutathione to S-hydroxymethylglutathione. The sequence is that of Putative glutathione-dependent formaldehyde-activating enzyme from Aspergillus niger (strain ATCC MYA-4892 / CBS 513.88 / FGSC A1513).